Consider the following 538-residue polypeptide: Protein PNS1 (538 aa).

The span at 1–54 (MGESDAYYNGGQQQQYNGGYQQQYQPQPPAASYQAPPQQPYQQQPYQQGPPQNG) shows a compositional bias: low complexity. The tract at residues 1–67 (MGESDAYYNG…GNGYMPAQGY (67 aa)) is disordered. Residues 1-88 (MGESDAYYNG…FKIAKPKYND (88 aa)) lie on the Cytoplasmic side of the membrane. A helical transmembrane segment spans residues 89 to 109 (LWAGILLILVFAGFVVVSGLA). The Extracellular portion of the chain corresponds to 110–137 (LQGYSANKGNAGDGIYNNKNDFSPNTST). Asn-134 is a glycosylation site (N-linked (GlcNAc...) asparagine). Residues 138–158 (VILFMFVLAVAFVLSYAYVWM) traverse the membrane as a helical segment. At 159-165 (ARLFPKQ) the chain is on the cytoplasmic side. A helical transmembrane segment spans residues 166–186 (FIWVTGILNVCWAIGTAIFYL). The Extracellular segment spans residues 187–191 (WRKYW). Residues 192-212 (SAGIVFLIFGLFMAFCFWTWI) form a helical membrane-spanning segment. Residues 213–239 (SRIPFSALMLKTTIDVSKKYGHVYLVS) lie on the Cytoplasmic side of the membrane. Residues 240-260 (LIGGIIATAFSAWYAITLVGI) traverse the membrane as a helical segment. Over 261–280 (YVKYQPAQDNPSCADGGCGK) the chain is Extracellular. Residues 281–301 (GKVIGLIAFITFAMYWFSEWL) traverse the membrane as a helical segment. Residues 302–335 (KNTIHTTIAGVYGSWYFNPHNFPKDATRASAKRA) are Cytoplasmic-facing. A helical membrane pass occupies residues 336-356 (LTYSFGSIALGSLLVAIIQFL). Residues 357-372 (RQICNAARNQEGADGS) lie on the Extracellular side of the membrane. A helical transmembrane segment spans residues 373–393 (FVGYAIFCCISCLLGLLEWAV). Over 394–434 (EFINRYAFCHIALYGKAYFAAAKDTWKMIKDRGIDALINDC) the chain is Cytoplasmic. Residues 435 to 455 (LIGPVLSFGALFIAYACALLA) traverse the membrane as a helical segment. The Extracellular portion of the chain corresponds to 456–474 (YLYLYFTDPAYNSDGQYTA). The helical transmembrane segment at 475–495 (VVMAFSFLIGFQIANVFTTPI) threads the bilayer. At 496–538 (SSGIETIFVAAGWDPQVMWRDHPELYNEMVRVYPKVQQVIKDR) the chain is on the cytoplasmic side.

Belongs to the CTL (choline transporter-like) family.

The protein localises to the cell membrane. In terms of biological role, probably involved in transport through the plasma membrane. This is Protein PNS1 (PNS1) from Gibberella zeae (strain ATCC MYA-4620 / CBS 123657 / FGSC 9075 / NRRL 31084 / PH-1) (Wheat head blight fungus).